The chain runs to 444 residues: Exodeoxyribonuclease 7 large subunit (444 aa).

This sequence belongs to the XseA family. Heterooligomer composed of large and small subunits.

The protein localises to the cytoplasm. The catalysed reaction is Exonucleolytic cleavage in either 5'- to 3'- or 3'- to 5'-direction to yield nucleoside 5'-phosphates.. Functionally, bidirectionally degrades single-stranded DNA into large acid-insoluble oligonucleotides, which are then degraded further into small acid-soluble oligonucleotides. This chain is Exodeoxyribonuclease 7 large subunit, found in Pseudoalteromonas translucida (strain TAC 125).